The chain runs to 512 residues: Maturase K (512 aa).

The protein belongs to the intron maturase 2 family. MatK subfamily.

Its subcellular location is the plastid. The protein localises to the chloroplast. Its function is as follows. Usually encoded in the trnK tRNA gene intron. Probably assists in splicing its own and other chloroplast group II introns. The polypeptide is Maturase K (Ginkgo biloba (Ginkgo)).